The following is a 102-amino-acid chain: Small ribosomal subunit protein uS10 (102 aa).

Positions 30-58 are disordered; sequence TGVNLSGPIPLPTKTLEIPTRKSPDGEGT.

Belongs to the universal ribosomal protein uS10 family. Part of the 30S ribosomal subunit.

In terms of biological role, involved in the binding of tRNA to the ribosomes. The protein is Small ribosomal subunit protein uS10 of Haloquadratum walsbyi (strain DSM 16790 / HBSQ001).